The primary structure comprises 205 residues: MSKYRGPRLRLVRKLGKLPGLTSKISKKTNTPGEHGQPQNKLLKNRSPYGLRLLEKQKLRFNYNITERQLLRYVKQAKNLTGSTGEILLAILEMRLDNIVYRLGMAPTIVAARQLVSHGHILVNKQKVNIPSYPCQLKEVISVKDKKASRDLVKKFVQESAVNPVPSHLSFNKENLVGIVNNVATREWIGLQINELLVIEYYSRN.

Positions 22 to 42 (TSKISKKTNTPGEHGQPQNKL) are disordered. Residues 28-42 (KTNTPGEHGQPQNKL) show a composition bias toward polar residues. The 64-residue stretch at 94 to 157 (MRLDNIVYRL…ASRDLVKKFV (64 aa)) folds into the S4 RNA-binding domain.

It belongs to the universal ribosomal protein uS4 family. In terms of assembly, part of the 30S ribosomal subunit. Contacts protein S5. The interaction surface between S4 and S5 is involved in control of translational fidelity.

It is found in the plastid. The protein localises to the chloroplast. Its function is as follows. One of the primary rRNA binding proteins, it binds directly to 16S rRNA where it nucleates assembly of the body of the 30S subunit. With S5 and S12 plays an important role in translational accuracy. The polypeptide is Small ribosomal subunit protein uS4c (rps4) (Tupiella akineta (Green alga)).